A 798-amino-acid polypeptide reads, in one-letter code: RNA cytosine-C(5)-methyltransferase NSUN2 (798 aa).

Over residues methionine 1–glutamine 13 the composition is skewed to basic residues. The segment at methionine 1–alanine 30 is disordered. Over residues arginine 14–alanine 30 the composition is skewed to basic and acidic residues. Residues cysteine 186–lysine 192, aspartate 217, aspartate 244, and aspartate 270 contribute to the S-adenosyl-L-methionine site. Cysteine 323 functions as the Nucleophile in the catalytic mechanism. Disordered regions lie at residues aspartate 476–threonine 499 and lysine 723–aspartate 798. Residues lysine 723–serine 747 are compositionally biased toward basic and acidic residues. The span at serine 751–valine 762 shows a compositional bias: acidic residues. Residues isoleucine 763–alanine 772 show a composition bias toward basic and acidic residues.

This sequence belongs to the class I-like SAM-binding methyltransferase superfamily. RsmB/NOP family. TRM4 subfamily.

It is found in the nucleus. Its subcellular location is the nucleolus. It localises to the cytoplasm. The protein resides in the mitochondrion. The protein localises to the cytoskeleton. It is found in the spindle. Its subcellular location is the secreted. It localises to the extracellular exosome. The catalysed reaction is cytidine(48) in tRNA + S-adenosyl-L-methionine = 5-methylcytidine(48) in tRNA + S-adenosyl-L-homocysteine + H(+). The enzyme catalyses cytidine(49) in tRNA + S-adenosyl-L-methionine = 5-methylcytidine(49) in tRNA + S-adenosyl-L-homocysteine + H(+). It carries out the reaction cytidine(50) in tRNA + S-adenosyl-L-methionine = 5-methylcytidine(50) in tRNA + S-adenosyl-L-homocysteine + H(+). It catalyses the reaction cytidine(34) in tRNA precursor + S-adenosyl-L-methionine = 5-methylcytidine(34) in tRNA precursor + S-adenosyl-L-homocysteine + H(+). The catalysed reaction is a cytidine in mRNA + S-adenosyl-L-methionine = a 5-methylcytidine in mRNA + S-adenosyl-L-homocysteine + H(+). Its function is as follows. RNA cytosine C(5)-methyltransferase that methylates cytosine to 5-methylcytosine (m5C) in various RNAs, such as tRNAs, mRNAs and some long non-coding RNAs (lncRNAs). Involved in various processes, such as epidermal stem cell differentiation, testis differentiation and maternal to zygotic transition during early development: acts by increasing protein synthesis; cytosine C(5)-methylation promoting tRNA stability and preventing mRNA decay. Methylates cytosine to 5-methylcytosine (m5C) at positions 34 and 48 of intron-containing tRNA(Leu)(CAA) precursors, and at positions 48, 49 and 50 of tRNA(Gly)(GCC) precursors. tRNA methylation is required generation of RNA fragments derived from tRNAs (tRFs). Also mediates C(5)-methylation of mitochondrial tRNAs. Catalyzes cytosine C(5)-methylation of mRNAs, leading to stabilize them and prevent mRNA decay. Cytosine C(5)-methylation of mRNAs also regulates mRNA export. Also mediates cytosine C(5)-methylation of non-coding RNAs, such as vault RNAs (vtRNAs), promoting their processing into regulatory small RNAs. Required for proper spindle assembly and chromosome segregation, independently of its methyltransferase activity. The chain is RNA cytosine-C(5)-methyltransferase NSUN2 from Xenopus tropicalis (Western clawed frog).